The primary structure comprises 158 residues: MRCPYCGSEDTQVKDSRPAEDNTSIRRRRICPDCGGRFTTFERVQLRELMVIKKTGRKVLFDRDKLVRSFEIALRKRPVDRDRIERAVSGIVRRLESSGETEISSEQIGLQVLEALKSLDDVAFVRYASVYRDFSHAEDFENVITEINAKIARDPLDP.

Residues Met1 to Asn22 form a disordered region. Residues Cys3–Cys34 fold into a zinc finger. Over residues Thr11 to Asn22 the composition is skewed to basic and acidic residues. One can recognise an ATP-cone domain in the interval Leu49–Asp139.

The protein belongs to the NrdR family. Zn(2+) is required as a cofactor.

In terms of biological role, negatively regulates transcription of bacterial ribonucleotide reductase nrd genes and operons by binding to NrdR-boxes. The chain is Transcriptional repressor NrdR from Rhizobium rhizogenes (strain K84 / ATCC BAA-868) (Agrobacterium radiobacter).